A 211-amino-acid polypeptide reads, in one-letter code: FMN-dependent NADH:quinone oxidoreductase (211 aa).

FMN-binding positions include serine 10 and 16–18; that span reads STS.

Belongs to the azoreductase type 1 family. As to quaternary structure, homodimer. FMN serves as cofactor.

The enzyme catalyses 2 a quinone + NADH + H(+) = 2 a 1,4-benzosemiquinone + NAD(+). It catalyses the reaction N,N-dimethyl-1,4-phenylenediamine + anthranilate + 2 NAD(+) = 2-(4-dimethylaminophenyl)diazenylbenzoate + 2 NADH + 2 H(+). Its function is as follows. Quinone reductase that provides resistance to thiol-specific stress caused by electrophilic quinones. In terms of biological role, also exhibits azoreductase activity. Catalyzes the reductive cleavage of the azo bond in aromatic azo compounds to the corresponding amines. This chain is FMN-dependent NADH:quinone oxidoreductase, found in Frankia casuarinae (strain DSM 45818 / CECT 9043 / HFP020203 / CcI3).